The sequence spans 245 residues: PF03932 family protein CutC (245 aa).

It belongs to the CutC family.

Its subcellular location is the cytoplasm. The protein is PF03932 family protein CutC of Caulobacter vibrioides (strain ATCC 19089 / CIP 103742 / CB 15) (Caulobacter crescentus).